Consider the following 591-residue polypeptide: Fanconi anemia group C protein homolog (591 aa).

As to quaternary structure, belongs to the multisubunit FA complex composed of FANCA, FANCB, FANCC, FANCE, FANCF, FANCG, FANCL/PHF9 and FANCM. This complex may also include HSP70. Interacts with ZBTB32. Upon IFNG induction, interacts with STAT1. Interacts with CDK1. Interacts with EIF2AK2. In terms of tissue distribution, ubiquitous.

It is found in the nucleus. It localises to the cytoplasm. In terms of biological role, DNA repair protein that may operate in a postreplication repair or a cell cycle checkpoint function. May be implicated in interstrand DNA cross-link repair and in the maintenance of normal chromosome stability. Upon IFNG induction, may facilitate STAT1 activation by recruiting STAT1 to IFNGR1. The protein is Fanconi anemia group C protein homolog (Fancc) of Mus musculus (Mouse).